We begin with the raw amino-acid sequence, 300 residues long: Protease HtpX homolog (300 aa).

2 helical membrane passes run 5–25 and 41–61; these read IFLLTLTNIAVIFLLTLFISL and TLFLFSMVVGFTGSFISLAIS. Histidine 146 serves as a coordination point for Zn(2+). Residue glutamate 147 is part of the active site. Zn(2+) is bound at residue histidine 150. 2 helical membrane-spanning segments follow: residues 161 to 181 and 196 to 216; these read LLQGVVNTFVVFLSRIIGFFV and IGFYLGMFISEIVLGLLASII. Residue glutamate 225 coordinates Zn(2+).

Belongs to the peptidase M48B family. Zn(2+) serves as cofactor.

Its subcellular location is the cell inner membrane. The polypeptide is Protease HtpX homolog (Methylacidiphilum infernorum (isolate V4) (Methylokorus infernorum (strain V4))).